We begin with the raw amino-acid sequence, 329 residues long: MKKSLIALTLAALPVAAMADVTLYGTIKTGVETSRSVEHNGGQVVSVETGTGIVDLGSKIGFKGQEDLGNGLKAIWQVEQKASIAGTDSGWGNRQSFIGLKGGFGKLRVGRLNSVLKDTGDINPWDSKSDYLGVNKIAEPEARLISVRYDSPEFAGLSGSVQYALNDNVGRHNSESYHAGFNYKNGGFFVQYGGAYKRHQDVDDVKIEKYQIHRLVSGYDNDALYASVAVQQQDAKLVEDNSHNSQTEVAATLAYRFGNVTPRVSYAHGFKGSVDDAKRDNTYDQVVVGAEYDFSKRTSALVSAGWLQEGKGENKFVATAGGVGLRHKF.

The N-terminal stretch at 1 to 19 (MKKSLIALTLAALPVAAMA) is a signal peptide.

Belongs to the Gram-negative porin family. In terms of assembly, homotrimer.

It localises to the cell outer membrane. Its function is as follows. Serves as a slightly cation selective porin. The polypeptide is Major outer membrane protein P.IB (porB) (Neisseria meningitidis serogroup A / serotype 4A (strain DSM 15465 / Z2491)).